The chain runs to 119 residues: Phenol 2-monooxygenase, oxygenase component DmpO (119 aa).

As to quaternary structure, the multicomponent enzyme phenol hydroxylase is formed by DmpL (P1 component), DmpM (P2 component), DmpN (P3 component), DmpO (P4 component) and DmpP (P5 component). The oxygenase component is a dimer composed of three subunits, DmpL, DmpN and DmpO (DmpLNO).

The catalysed reaction is phenol + NADH + O2 + H(+) = catechol + NAD(+) + H2O. Its pathway is aromatic compound metabolism; phenol degradation. With respect to regulation, requires DmpM for efficient turnover. The activity of DmpLNO oxygenase is inhibited by dithiothreitol (DTT) by a mechanism apparently involving H(2)O(2) generation. In terms of biological role, part of a multicomponent enzyme which catalyzes the degradation of phenol and some of its methylated derivatives. DmpL, DmpN and DmpO form the oxygenase component of the complex. Required for growth on phenol and for in vitro phenol hydroxylase activity. The chain is Phenol 2-monooxygenase, oxygenase component DmpO from Pseudomonas sp. (strain CF600).